Reading from the N-terminus, the 220-residue chain is Deoxyribose-phosphate aldolase (220 aa).

The Proton donor/acceptor role is filled by aspartate 89. Lysine 151 serves as the catalytic Schiff-base intermediate with acetaldehyde. Catalysis depends on lysine 180, which acts as the Proton donor/acceptor.

This sequence belongs to the DeoC/FbaB aldolase family. DeoC type 1 subfamily.

The protein localises to the cytoplasm. The catalysed reaction is 2-deoxy-D-ribose 5-phosphate = D-glyceraldehyde 3-phosphate + acetaldehyde. The protein operates within carbohydrate degradation; 2-deoxy-D-ribose 1-phosphate degradation; D-glyceraldehyde 3-phosphate and acetaldehyde from 2-deoxy-alpha-D-ribose 1-phosphate: step 2/2. In terms of biological role, catalyzes a reversible aldol reaction between acetaldehyde and D-glyceraldehyde 3-phosphate to generate 2-deoxy-D-ribose 5-phosphate. This chain is Deoxyribose-phosphate aldolase, found in Bdellovibrio bacteriovorus (strain ATCC 15356 / DSM 50701 / NCIMB 9529 / HD100).